The following is an 852-amino-acid chain: Bifunctional heparan sulfate N-deacetylase/N-sulfotransferase 1 (852 aa).

Residues 1–13 (MIITPYLNRKITR) are Cytoplasmic-facing. The chain crosses the membrane as a helical; Signal-anchor for type II membrane protein span at residues 14–34 (PLKWILALIFLYLIYICLFSN). Residues 34-574 (NNSKPPKPRK…PRHHAILPPS (541 aa)) are heparan sulfate N-deacetylase 1. At 35 to 852 (NSKPPKPRKK…WLEESVRIRA (818 aa)) the chain is on the lumenal side. N-linked (GlcNAc...) asparagine glycosylation is found at Asn50, Asn72, Asn261, Asn328, Asn377, Asn428, and Asn576. Residues 575–852 (INCTKKSLPD…WLEESVRIRA (278 aa)) form a heparan sulfate N-sulfotransferase 1 region. The active-site For sulfotransferase activity is Lys592. 592–596 (KTGST) is a 3'-phosphoadenylyl sulfate binding site. N-linked (GlcNAc...) asparagine glycosylation is present at Asn607. Position 686 (Ser686) interacts with 3'-phosphoadenylyl sulfate. Asn712 carries an N-linked (GlcNAc...) asparagine glycan. A disulfide bridge links Cys789 with Cys798. Residue 803 to 807 (KGRKY) participates in 3'-phosphoadenylyl sulfate binding.

This sequence belongs to the sulfotransferase 1 family. NDST subfamily. In terms of assembly, monomer. As to expression, present in some specific neurons in head and tail regions and muscles.

Its subcellular location is the golgi apparatus membrane. The enzyme catalyses alpha-D-glucosaminyl-[heparan sulfate](n) + 3'-phosphoadenylyl sulfate = N-sulfo-alpha-D-glucosaminyl-[heparan sulfate](n) + adenosine 3',5'-bisphosphate + 2 H(+). It functions in the pathway glycan metabolism; heparan sulfate biosynthesis. Its pathway is glycan metabolism; heparin biosynthesis. Essential bifunctional enzyme that catalyzes both the N-deacetylation and the N-sulfation of glucosamine (GlcNAc) of the glycosaminoglycan in heparan sulfate. Modifies the GlcNAc-GlcA disaccharide repeating sugar backbone to make N-sulfated heparosan, a prerequisite substrate for later modifications in heparin biosynthesis. In Caenorhabditis elegans, this protein is Bifunctional heparan sulfate N-deacetylase/N-sulfotransferase 1 (hst-1).